Reading from the N-terminus, the 263-residue chain is Glucosamine-6-phosphate deaminase (263 aa).

The active-site Proton acceptor; for enolization step is the Asp72. Residue Asp141 is the For ring-opening step of the active site. His143 functions as the Proton acceptor; for ring-opening step in the catalytic mechanism. The active-site For ring-opening step is Glu148.

This sequence belongs to the glucosamine/galactosamine-6-phosphate isomerase family. NagB subfamily.

The enzyme catalyses alpha-D-glucosamine 6-phosphate + H2O = beta-D-fructose 6-phosphate + NH4(+). It functions in the pathway amino-sugar metabolism; N-acetylneuraminate degradation; D-fructose 6-phosphate from N-acetylneuraminate: step 5/5. Its activity is regulated as follows. Allosterically activated by N-acetylglucosamine 6-phosphate (GlcNAc6P). Its function is as follows. Catalyzes the reversible isomerization-deamination of glucosamine 6-phosphate (GlcN6P) to form fructose 6-phosphate (Fru6P) and ammonium ion. This chain is Glucosamine-6-phosphate deaminase, found in Porphyromonas gingivalis (strain ATCC 33277 / DSM 20709 / CIP 103683 / JCM 12257 / NCTC 11834 / 2561).